The sequence spans 413 residues: Protein arginine N-methyltransferase 2 (413 aa).

Disordered stretches follow at residues 65 to 85 (DDEE…QKSV) and 148 to 178 (ELED…SAPQ). Positions 148 to 173 (ELEDDDEEEEEGQEEQTGTEEVEVEG) are enriched in acidic residues. The 222-residue stretch at 192–413 (TGPDVTNSRY…YRLPLCKYMD (222 aa)) folds into the RMT2 domain. S-adenosyl-L-methionine-binding positions include Tyr201, Met230, 250–255 (HGMGIV), 271–273 (EAH), 298–299 (WQ), and Asp318.

The protein belongs to the class I-like SAM-binding methyltransferase superfamily. RMT2 methyltransferase family. As to quaternary structure, monomer.

Its subcellular location is the cytoplasm. It is found in the nucleus. S-adenosyl-L-methionine-dependent protein-arginine N-methyltransferase that methylates the delta-nitrogen atom of arginine residues to form N5-methylarginine (type IV) in target proteins. Monomethylates ribosomal protein L12. The polypeptide is Protein arginine N-methyltransferase 2 (Aspergillus oryzae (strain ATCC 42149 / RIB 40) (Yellow koji mold)).